Reading from the N-terminus, the 651-residue chain is Acetyl-coenzyme A synthetase (651 aa).

CoA contacts are provided by residues 189–192 (RGGK), T311, and N335. ATP-binding positions include 387 to 389 (GEP), 411 to 416 (DTWWQT), D500, and R515. CoA is bound at residue S523. R526 lines the ATP pocket. The Mg(2+) site is built by V537, H539, and V542. R586 serves as a coordination point for CoA. K611 carries the post-translational modification N6-acetyllysine.

This sequence belongs to the ATP-dependent AMP-binding enzyme family. The cofactor is Mg(2+). In terms of processing, acetylated. Deacetylation by the SIR2-homolog deacetylase activates the enzyme.

The enzyme catalyses acetate + ATP + CoA = acetyl-CoA + AMP + diphosphate. Its function is as follows. Catalyzes the conversion of acetate into acetyl-CoA (AcCoA), an essential intermediate at the junction of anabolic and catabolic pathways. AcsA undergoes a two-step reaction. In the first half reaction, AcsA combines acetate with ATP to form acetyl-adenylate (AcAMP) intermediate. In the second half reaction, it can then transfer the acetyl group from AcAMP to the sulfhydryl group of CoA, forming the product AcCoA. This is Acetyl-coenzyme A synthetase from Brucella anthropi (strain ATCC 49188 / DSM 6882 / CCUG 24695 / JCM 21032 / LMG 3331 / NBRC 15819 / NCTC 12168 / Alc 37) (Ochrobactrum anthropi).